Consider the following 428-residue polypeptide: Enolase (428 aa).

Glutamine 163 lines the (2R)-2-phosphoglycerate pocket. Catalysis depends on glutamate 205, which acts as the Proton donor. Mg(2+) is bound by residues aspartate 242, glutamate 285, and aspartate 312. Positions 337, 366, 367, and 388 each coordinate (2R)-2-phosphoglycerate. The active-site Proton acceptor is lysine 337.

The protein belongs to the enolase family. Mg(2+) is required as a cofactor.

It is found in the cytoplasm. The protein resides in the secreted. The protein localises to the cell surface. The enzyme catalyses (2R)-2-phosphoglycerate = phosphoenolpyruvate + H2O. Its pathway is carbohydrate degradation; glycolysis; pyruvate from D-glyceraldehyde 3-phosphate: step 4/5. Its function is as follows. Catalyzes the reversible conversion of 2-phosphoglycerate (2-PG) into phosphoenolpyruvate (PEP). It is essential for the degradation of carbohydrates via glycolysis. The sequence is that of Enolase from Finegoldia magna (strain ATCC 29328 / DSM 20472 / WAL 2508) (Peptostreptococcus magnus).